The sequence spans 447 residues: Phosphoglucosamine mutase (447 aa).

Ser-102 (phosphoserine intermediate) is an active-site residue. Mg(2+) is bound by residues Ser-102, Asp-241, Asp-243, and Asp-245. Residue Ser-102 is modified to Phosphoserine.

This sequence belongs to the phosphohexose mutase family. Mg(2+) serves as cofactor. Activated by phosphorylation.

It catalyses the reaction alpha-D-glucosamine 1-phosphate = D-glucosamine 6-phosphate. Its function is as follows. Catalyzes the conversion of glucosamine-6-phosphate to glucosamine-1-phosphate. The protein is Phosphoglucosamine mutase of Symbiobacterium thermophilum (strain DSM 24528 / JCM 14929 / IAM 14863 / T).